We begin with the raw amino-acid sequence, 387 residues long: Type 2 DNA topoisomerase 6 subunit A (387 aa).

Residues 12–160 (EARKKALAVF…MLILSKEKGK (149 aa)) enclose the Topo IIA-type catalytic domain. Tyr106 functions as the O-(5'-phospho-DNA)-tyrosine intermediate in the catalytic mechanism. Residues Glu207 and Asp259 each coordinate Mg(2+).

The protein belongs to the TOP6A family. As to quaternary structure, homodimer. Heterotetramer of two Top6A and two Top6B chains. The cofactor is Mg(2+).

The enzyme catalyses ATP-dependent breakage, passage and rejoining of double-stranded DNA.. Relaxes both positive and negative superturns and exhibits a strong decatenase activity. The sequence is that of Type 2 DNA topoisomerase 6 subunit A from Hyperthermus butylicus (strain DSM 5456 / JCM 9403 / PLM1-5).